Here is a 219-residue protein sequence, read N- to C-terminus: GPI ethanolamine phosphate transferase, stabilizing subunit (219 aa).

A run of 6 helical transmembrane segments spans residues tyrosine 11–leucine 31, threonine 42–valine 62, tyrosine 86–isoleucine 106, phenylalanine 113–proline 133, leucine 155–leucine 175, and threonine 189–tryptophan 209.

The protein belongs to the PIGF family. As to quaternary structure, part of the ethanolamine phosphate transferase 3 complex composed by PIGO and PIGF. Part of the ethanolamine phosphate transferase 2 complex with PIGG. PIGF is required to stabilize PIGG and PIGO.

It localises to the endoplasmic reticulum membrane. It participates in glycolipid biosynthesis; glycosylphosphatidylinositol-anchor biosynthesis. Its function is as follows. Stabilizing subunit of the ethanolamine phosphate transferase 3 and ethanolamine phosphate transferase 2 complexes that sequentially transfer an ethanolamine phosphate (EtNP) from a phosphatidylethanolamine (PE) to the 6-OH position of the third alpha-1,2-linked mannose and the second alpha-1,6-linked mannose of the alpha-D-Man-(1-&gt;2)-alpha-D-Man-(1-&gt;6)-2-PEtn-alpha-D-Man-(1-&gt;4)-alpha-D-GlcN-(1-&gt;6)-(1-radyl,2-acyl-sn-glycero-3-phospho)-2-acyl-inositol (also termed H6) intermediate to generate a 6-PEtn-alpha-D-Man-(1-&gt;2)-6-PEtn-alpha-D-Man-(1-&gt;6)-2-PEtn-alpha-D-Man-(1-&gt;4)-alpha-D-GlcN-(1-&gt;6)-(1-radyl,2-acyl-sn-glycero-3-phospho)-2-acyl-inositol (also termed H8). Participates in the tenth and eleventh steps of the glycosylphosphatidylinositol-anchor biosynthesis, in association with PIGO and PIGG, respectively. In Homo sapiens (Human), this protein is GPI ethanolamine phosphate transferase, stabilizing subunit.